Here is a 190-residue protein sequence, read N- to C-terminus: UPF0398 protein LAR_0869 (190 aa).

Belongs to the UPF0398 family.

The sequence is that of UPF0398 protein LAR_0869 from Limosilactobacillus reuteri subsp. reuteri (strain JCM 1112) (Lactobacillus reuteri).